The following is a 596-amino-acid chain: Elongation factor 4 (596 aa).

One can recognise a tr-type G domain in the interval 2 to 184 (SHIRNFSIIA…RLVHTIPAPE (183 aa)). GTP is bound by residues 14-19 (DHGKST) and 131-134 (NKMD).

This sequence belongs to the TRAFAC class translation factor GTPase superfamily. Classic translation factor GTPase family. LepA subfamily.

The protein localises to the cell inner membrane. It catalyses the reaction GTP + H2O = GDP + phosphate + H(+). Required for accurate and efficient protein synthesis under certain stress conditions. May act as a fidelity factor of the translation reaction, by catalyzing a one-codon backward translocation of tRNAs on improperly translocated ribosomes. Back-translocation proceeds from a post-translocation (POST) complex to a pre-translocation (PRE) complex, thus giving elongation factor G a second chance to translocate the tRNAs correctly. Binds to ribosomes in a GTP-dependent manner. The chain is Elongation factor 4 from Pseudomonas putida (strain GB-1).